Consider the following 360-residue polypeptide: Peptide chain release factor 1 (360 aa).

Glutamine 235 is subject to N5-methylglutamine. The interval 284-313 is disordered; it reads AKRQQAEASTRRNLLGSGDRSDRNRTYNFP.

Belongs to the prokaryotic/mitochondrial release factor family. Methylated by PrmC. Methylation increases the termination efficiency of RF1.

It is found in the cytoplasm. In terms of biological role, peptide chain release factor 1 directs the termination of translation in response to the peptide chain termination codons UAG and UAA. The protein is Peptide chain release factor 1 of Escherichia coli (strain UTI89 / UPEC).